Reading from the N-terminus, the 154-residue chain is Nuclear cap-binding protein subunit 2 (154 aa).

Residues tyrosine 10, tyrosine 33, 102–106 (RVDWD), 113–117 (RQYGR), and 123–124 (QV) each bind mRNA. The RRM domain maps to 30–108 (CTLYVGNLSF…RLIRVDWDAG (79 aa)).

The protein belongs to the RRM NCBP2 family. As to quaternary structure, component of the nuclear cap-binding complex (CBC), a heterodimer composed of Cbp80 and Cbp20 that interacts with m7GpppG-capped RNA. Interacts with Ars2.

It is found in the nucleus. Component of the cap-binding complex (CBC), which binds co-transcriptionally to the 5' cap of pre-mRNAs and is involved in various processes such as pre-mRNA splicing and RNA-mediated gene silencing (RNAi). The CBC complex is involved in miRNA-mediated RNA interference via its interaction with Ars2 and is required for primary microRNAs (miRNAs) processing. Also involved in innate immunity via the short interfering RNAs (siRNAs) processing machinery by restricting the viral RNA production. In the CBC complex, Cbp20 recognizes and binds capped RNAs (m7GpppG-capped RNA) but requires Cbp80 to stabilize the movement of its N-terminal loop and lock the CBC into a high affinity cap-binding state with the cap structure. The chain is Nuclear cap-binding protein subunit 2 (Cbp20) from Drosophila yakuba (Fruit fly).